Reading from the N-terminus, the 427-residue chain is Phosphoribosylamine--glycine ligase (427 aa).

The ATP-grasp domain maps to 107 to 312 (KDLCARFNIP…LLALVNAAVD (206 aa)). 133–193 (IRQQGAPIVV…EEFLDGEEAS (61 aa)) is an ATP binding site. Mg(2+) is bound by residues E282 and N284.

Belongs to the GARS family. Mg(2+) serves as cofactor. Mn(2+) is required as a cofactor.

It catalyses the reaction 5-phospho-beta-D-ribosylamine + glycine + ATP = N(1)-(5-phospho-beta-D-ribosyl)glycinamide + ADP + phosphate + H(+). The protein operates within purine metabolism; IMP biosynthesis via de novo pathway; N(1)-(5-phospho-D-ribosyl)glycinamide from 5-phospho-alpha-D-ribose 1-diphosphate: step 2/2. In Brucella melitensis biotype 1 (strain ATCC 23456 / CCUG 17765 / NCTC 10094 / 16M), this protein is Phosphoribosylamine--glycine ligase.